The sequence spans 271 residues: Potential ATP-binding protein (271 aa).

ATP is bound at residue 34-41; that stretch reads GQPGVGKT.

The polypeptide is Potential ATP-binding protein (Staphylococcus aureus).